Reading from the N-terminus, the 901-residue chain is Aconitate hydratase A (901 aa).

Residues cysteine 443, cysteine 509, and cysteine 512 each coordinate [4Fe-4S] cluster.

Belongs to the aconitase/IPM isomerase family. In terms of assembly, monomer. Requires [4Fe-4S] cluster as cofactor.

The enzyme catalyses citrate = D-threo-isocitrate. It catalyses the reaction (2S,3R)-3-hydroxybutane-1,2,3-tricarboxylate = 2-methyl-cis-aconitate + H2O. The protein operates within carbohydrate metabolism; tricarboxylic acid cycle; isocitrate from oxaloacetate: step 2/2. It functions in the pathway organic acid metabolism; propanoate degradation. Functionally, involved in the catabolism of short chain fatty acids (SCFA) via the tricarboxylic acid (TCA)(acetyl degradation route) and probably the 2-methylcitrate cycle I (propionate degradation route). Catalyzes the reversible isomerization of citrate to isocitrate via cis-aconitate. Could catalyze the hydration of 2-methyl-cis-aconitate to yield (2R,3S)-2-methylisocitrate. The apo form of AcnA functions as a RNA-binding regulatory protein. This Staphylococcus epidermidis (strain ATCC 12228 / FDA PCI 1200) protein is Aconitate hydratase A (acnA).